Here is a 304-residue protein sequence, read N- to C-terminus: UDP-N-acetylenolpyruvoylglucosamine reductase (304 aa).

The FAD-binding PCMH-type domain maps to 33–198 (RVGGPADILV…IEATIELESG (166 aa)). Arg-177 is an active-site residue. Ser-227 functions as the Proton donor in the catalytic mechanism. Glu-297 is a catalytic residue.

It belongs to the MurB family. The cofactor is FAD.

It localises to the cytoplasm. It catalyses the reaction UDP-N-acetyl-alpha-D-muramate + NADP(+) = UDP-N-acetyl-3-O-(1-carboxyvinyl)-alpha-D-glucosamine + NADPH + H(+). It functions in the pathway cell wall biogenesis; peptidoglycan biosynthesis. In terms of biological role, cell wall formation. The chain is UDP-N-acetylenolpyruvoylglucosamine reductase from Clostridium perfringens (strain SM101 / Type A).